A 304-amino-acid polypeptide reads, in one-letter code: HPr kinase/phosphorylase (304 aa).

Active-site residues include H136 and K157. 151–158 (GESGIGKS) contributes to the ATP binding site. S158 contacts Mg(2+). Catalysis depends on D175, which acts as the Proton acceptor; for phosphorylation activity. Proton donor; for dephosphorylation activity. Positions 198–207 (LEVRGMGIID) are important for the catalytic mechanism of both phosphorylation and dephosphorylation. E199 contributes to the Mg(2+) binding site. R240 is an active-site residue. The segment at 261-266 (PIRPGR) is important for the catalytic mechanism of dephosphorylation.

This sequence belongs to the HPrK/P family. Homohexamer. Mg(2+) serves as cofactor.

It carries out the reaction [HPr protein]-L-serine + ATP = [HPr protein]-O-phospho-L-serine + ADP + H(+). It catalyses the reaction [HPr protein]-O-phospho-L-serine + phosphate + H(+) = [HPr protein]-L-serine + diphosphate. In terms of biological role, catalyzes the ATP- as well as the pyrophosphate-dependent phosphorylation of a specific serine residue in HPr, a phosphocarrier protein of the phosphoenolpyruvate-dependent sugar phosphotransferase system (PTS). HprK/P also catalyzes the pyrophosphate-producing, inorganic phosphate-dependent dephosphorylation (phosphorolysis) of seryl-phosphorylated HPr (P-Ser-HPr). The two antagonistic activities of HprK/P are regulated by several intracellular metabolites, which change their concentration in response to the absence or presence of rapidly metabolisable carbon sources (glucose, fructose, etc.) in the growth medium. Therefore, by controlling the phosphorylation state of HPr, HPrK/P is a sensor enzyme that plays a major role in the regulation of carbon metabolism and sugar transport: it mediates carbon catabolite repression (CCR), and regulates PTS-catalyzed carbohydrate uptake and inducer exclusion. The protein is HPr kinase/phosphorylase of Clostridium acetobutylicum (strain ATCC 824 / DSM 792 / JCM 1419 / IAM 19013 / LMG 5710 / NBRC 13948 / NRRL B-527 / VKM B-1787 / 2291 / W).